A 699-amino-acid chain; its full sequence is Elongation factor G (699 aa).

The 281-residue stretch at 8-288 (EDYRNFGIMA…AVVDYLPSPL (281 aa)) folds into the tr-type G domain. GTP-binding positions include 17–24 (AHIDAGKT), 86–90 (DTPGH), and 140–143 (NKMD).

Belongs to the TRAFAC class translation factor GTPase superfamily. Classic translation factor GTPase family. EF-G/EF-2 subfamily.

It localises to the cytoplasm. In terms of biological role, catalyzes the GTP-dependent ribosomal translocation step during translation elongation. During this step, the ribosome changes from the pre-translocational (PRE) to the post-translocational (POST) state as the newly formed A-site-bound peptidyl-tRNA and P-site-bound deacylated tRNA move to the P and E sites, respectively. Catalyzes the coordinated movement of the two tRNA molecules, the mRNA and conformational changes in the ribosome. This chain is Elongation factor G, found in Rhizobium etli (strain CIAT 652).